The sequence spans 172 residues: Adenine phosphoribosyltransferase (172 aa).

This sequence belongs to the purine/pyrimidine phosphoribosyltransferase family. As to quaternary structure, homodimer.

Its subcellular location is the cytoplasm. The catalysed reaction is AMP + diphosphate = 5-phospho-alpha-D-ribose 1-diphosphate + adenine. Its pathway is purine metabolism; AMP biosynthesis via salvage pathway; AMP from adenine: step 1/1. Its function is as follows. Catalyzes a salvage reaction resulting in the formation of AMP, that is energically less costly than de novo synthesis. This Roseiflexus castenholzii (strain DSM 13941 / HLO8) protein is Adenine phosphoribosyltransferase.